A 313-amino-acid polypeptide reads, in one-letter code: Methionyl-tRNA formyltransferase (313 aa).

110–113 (SLLP) lines the (6S)-5,6,7,8-tetrahydrofolate pocket.

The protein belongs to the Fmt family.

It carries out the reaction L-methionyl-tRNA(fMet) + (6R)-10-formyltetrahydrofolate = N-formyl-L-methionyl-tRNA(fMet) + (6S)-5,6,7,8-tetrahydrofolate + H(+). Functionally, attaches a formyl group to the free amino group of methionyl-tRNA(fMet). The formyl group appears to play a dual role in the initiator identity of N-formylmethionyl-tRNA by promoting its recognition by IF2 and preventing the misappropriation of this tRNA by the elongation apparatus. This is Methionyl-tRNA formyltransferase from Lysinibacillus sphaericus (strain C3-41).